A 704-amino-acid chain; its full sequence is Probable serine/threonine-protein kinase WNK1 (704 aa).

One can recognise a Protein kinase domain in the interval 27–284 (GRYNDVLGKG…ARELLKDPFL (258 aa)). ATP is bound by residues 107-110 (TEMF) and Lys157. Asp174 functions as the Proton acceptor in the catalytic mechanism. The interval 499–521 (QTDLQDSGGSSDDGGGQTQHVKD) is disordered.

This sequence belongs to the protein kinase superfamily. Ser/Thr protein kinase family. WNK subfamily.

It catalyses the reaction L-seryl-[protein] + ATP = O-phospho-L-seryl-[protein] + ADP + H(+). The catalysed reaction is L-threonyl-[protein] + ATP = O-phospho-L-threonyl-[protein] + ADP + H(+). The chain is Probable serine/threonine-protein kinase WNK1 (WNK1) from Oryza sativa subsp. japonica (Rice).